Consider the following 144-residue polypeptide: Small ribosomal subunit protein eS12z (144 aa).

Ser-2 carries the N-acetylserine modification.

The protein belongs to the eukaryotic ribosomal protein eS12 family.

The chain is Small ribosomal subunit protein eS12z (RPS12A) from Arabidopsis thaliana (Mouse-ear cress).